Here is a 224-residue protein sequence, read N- to C-terminus: Perchlorate reductase assembly chaperone protein (224 aa).

It belongs to the type II DMSO reductase enzyme chaperone family.

It localises to the cytoplasm. May function as a system-specific molybdenum chaperone protein essential for the assembly of the perchlorate reductase PcrAB complex prior to its periplasmic translocation via the Tat pathway. The chain is Perchlorate reductase assembly chaperone protein (pcrD) from Dechloromonas aromatica (strain RCB).